A 129-amino-acid polypeptide reads, in one-letter code: Lysozyme C (129 aa).

The 129-residue stretch at lysine 1–leucine 129 folds into the C-type lysozyme domain. Cystine bridges form between cysteine 6–cysteine 127, cysteine 30–cysteine 115, cysteine 64–cysteine 80, and cysteine 76–cysteine 94. Residues glutamate 35 and aspartate 52 contribute to the active site.

The protein belongs to the glycosyl hydrolase 22 family. As to quaternary structure, monomer.

The protein localises to the secreted. It catalyses the reaction Hydrolysis of (1-&gt;4)-beta-linkages between N-acetylmuramic acid and N-acetyl-D-glucosamine residues in a peptidoglycan and between N-acetyl-D-glucosamine residues in chitodextrins.. Functionally, lysozymes have primarily a bacteriolytic function; those in tissues and body fluids are associated with the monocyte-macrophage system and enhance the activity of immunoagents. The protein is Lysozyme C (LYZ) of Numida meleagris (Helmeted guineafowl).